We begin with the raw amino-acid sequence, 287 residues long: Ribosomal RNA small subunit methyltransferase A (287 aa).

6 residues coordinate S-adenosyl-L-methionine: asparagine 35, valine 37, glycine 62, glutamate 83, aspartate 113, and asparagine 131.

Belongs to the class I-like SAM-binding methyltransferase superfamily. rRNA adenine N(6)-methyltransferase family. RsmA subfamily.

The protein localises to the cytoplasm. The enzyme catalyses adenosine(1518)/adenosine(1519) in 16S rRNA + 4 S-adenosyl-L-methionine = N(6)-dimethyladenosine(1518)/N(6)-dimethyladenosine(1519) in 16S rRNA + 4 S-adenosyl-L-homocysteine + 4 H(+). Specifically dimethylates two adjacent adenosines (A1518 and A1519) in the loop of a conserved hairpin near the 3'-end of 16S rRNA in the 30S particle. May play a critical role in biogenesis of 30S subunits. This chain is Ribosomal RNA small subunit methyltransferase A, found in Thermobifida fusca (strain YX).